Here is an 878-residue protein sequence, read N- to C-terminus: MASTGEPDRKRRHFSSISPSEAAAAVKKQPFFWPSSEDKLDTAVLQFQNLKLSQKLEAQQVECSILEDKLSQIKEKQLPYNSSLKTVHKSWEKLTASVESCSVRVSDSSSGAHRFVNKEDGSSPAVKNDFINRLLETGATESSSSNICSNQMEENGVNTSSQMTQTLYNLVAATEDLRCLKDELYPTVLRTNLGKDLCGQLALSELESEIKSFRGDLDDVLVKFKSLSRELQSHRDADAKVRVDLKRIRGELEDEVVELQQCNGDLSALRAERDATAGAFFPVLSLGNKLATSDRERDKQRDLQDMETVLKELTVLASGRLQQLKNLHEERTKMLGKMSNLQNKSKSVRCISSSQACLSLKDQLEKSKEAVFQYMALLEKLQVEKDSIVWKEREINIKNELGDVSRKTSAVTDSRMASLDSEIQKQLDEKMRIKTRLGNISRERGRKEIFADMKALISSFPEEMSSMRSQLNNYKETAGGIHSLRADVQSLSGVLCRKTKEYEALQLRSADYASQLGDLNATVCDLKNSHEELKLFLDMYKRESTDARDIAEAKEQEYRAWAHVQSLKSSLDEQNLELRVKAANEAEAVSQQMLAAAEAEIADLRQKMDDCKRDVAKHSDILKSKHEEHGTYLSEIQTIGSAYEDIVPQNQQLLLQVTERDDYNIKLFLEGITSRQMQDTLLIDKYIMDKDIQQGSAYASFLSKKSSRIEDQLRFCTDQFQKLAEDKYQKSVSLENLQKKRADIGNGLEQARSRLEESHSKVEQSRLDYGALELELEIERFNRRRIEEEMEIAKKKVSRLRSLIEGSSAIQKLRQELSEFKEILKCKACNDRPKEVVITKCYHLFCNPCVQKLTGTRQKKCPTCSASFGPNDIKPIYI.

The segment at 1–21 (MASTGEPDRKRRHFSSISPSE) is disordered. Coiled-coil stretches lie at residues 48–76 (QNLK…IKEK), 200–261 (QLAL…ELQQ), 293–382 (SDRE…EKLQ), and 537–624 (LDMY…ILKS). The RING-type zinc-finger motif lies at 826 to 865 (CKACNDRPKEVVITKCYHLFCNPCVQKLTGTRQKKCPTCS).

Belongs to the BRE1 family. In terms of assembly, may act as a tetramer consisting of two copies of HUB1 and two copies of HUB2. Interacts with MED21. As to expression, ubiquitously expressed.

It localises to the nucleus. The catalysed reaction is S-ubiquitinyl-[E2 ubiquitin-conjugating enzyme]-L-cysteine + [acceptor protein]-L-lysine = [E2 ubiquitin-conjugating enzyme]-L-cysteine + N(6)-ubiquitinyl-[acceptor protein]-L-lysine.. It participates in protein modification; protein ubiquitination. Its function is as follows. E3 ubiquitin-protein ligase that monoubiquitinates H2B to form H2BK143ub1. H2BK143ub1 gives a specific tag for epigenetic transcriptional activation and is also prerequisite for H3K4me and maybe H3K79me. It thereby plays a central role in histone code and gene regulation. Forms a ubiquitin ligase complex in cooperation with the E2 enzyme UBC2/RAD6. Required for the regulation of flowering time and defense against necrotrophic fungal pathogens. Involved in the control of seed dormancy and germination. This is E3 ubiquitin-protein ligase BRE1-like 1 (HUB1) from Arabidopsis thaliana (Mouse-ear cress).